The primary structure comprises 86 residues: UPF0437 protein Ava_4254 (86 aa).

It belongs to the UPF0437 family.

This Trichormus variabilis (strain ATCC 29413 / PCC 7937) (Anabaena variabilis) protein is UPF0437 protein Ava_4254.